The chain runs to 537 residues: Pheophorbide a oxygenase, chloroplastic (537 aa).

Residues 1-49 (MSVVLLSSTSATITKSQSKKIPFLSPTTKFPLKVSISPSRSKLFHNPLR) constitute a chloroplast transit peptide. Positions 51-77 (AAPPSVPTSDSTEEKRIEEEYGGDKEE) are disordered. The segment covering 62–77 (TEEKRIEEEYGGDKEE) has biased composition (basic and acidic residues). Positions 88 to 200 (WYPVSLVEDL…TMVSQGLLFV (113 aa)) constitute a Rieske domain. Cys-130, His-132, Cys-150, and His-153 together coordinate [2Fe-2S] cluster.

In terms of assembly, interacts with HCAR, SGR1, RCCR, PPH and the LHCII complex. Part of a SGR1-CCE-LHCII complex, which acts in chlorophyll breakdown.

The protein localises to the plastid. It localises to the chloroplast thylakoid membrane. It carries out the reaction pheophorbide a + 2 reduced [2Fe-2S]-[ferredoxin] + O2 + 2 H(+) = red chlorophyll catabolite + 2 oxidized [2Fe-2S]-[ferredoxin]. It functions in the pathway porphyrin-containing compound metabolism; chlorophyll degradation. With respect to regulation, might be regulated by a phosphorylation/dephosphorylation mechanism. In terms of biological role, catalyzes the key reaction of chlorophyll catabolism, porphyrin macrocycle cleavage of pheophorbide a (pheide a) to a primary fluorescent catabolite (pFCC). Works in a two-step reaction with red chlorophyll catabolite reductase (RCCR). Creates the intermediate RCC through the opening of the porphyrin macrocycle by the introduction of one atom of molecular oxygen at the alpha-methine bridge. Seems to be specific for pheide a. Belongs to the chlorophyll catabolic enzymes (CCEs). The protein is Pheophorbide a oxygenase, chloroplastic (PAO) of Arabidopsis thaliana (Mouse-ear cress).